The chain runs to 193 residues: dCTP deaminase (193 aa).

DCTP contacts are provided by residues 110 to 115 (RSSLAR), Asp-128, 136 to 138 (VLE), Tyr-171, Lys-178, and Gln-182. Residue Glu-138 is the Proton donor/acceptor of the active site. A disordered region spans residues 169-193 (RPYNSRQDAKYRDQQGAVASRIDKD).

Belongs to the dCTP deaminase family. As to quaternary structure, homotrimer.

It catalyses the reaction dCTP + H2O + H(+) = dUTP + NH4(+). It functions in the pathway pyrimidine metabolism; dUMP biosynthesis; dUMP from dCTP (dUTP route): step 1/2. In terms of biological role, catalyzes the deamination of dCTP to dUTP. The protein is dCTP deaminase of Serratia proteamaculans (strain 568).